Reading from the N-terminus, the 132-residue chain is MNQLPIMAKQAAEIASNAQELSNKLKDLVIDASWQTNTNTIDPLVFAITIFVLASFVGYYVVWKVTPALHTPLMSITNAISGIIVISSMIAITSSSAFEFSSLLGSFATLLASINIFGGFIVTTRMLEMFKK.

The next 3 helical transmembrane spans lie at 43–63, 72–92, and 103–123; these read PLVF…YVVW, PLMS…MIAI, and LLGS…FIVT.

As to quaternary structure, complex of an alpha and a beta chain; in Rickettsia, the alpha chain seems to be made of two subunits.

The protein resides in the cell inner membrane. The enzyme catalyses NAD(+) + NADPH + H(+)(in) = NADH + NADP(+) + H(+)(out). In terms of biological role, the transhydrogenation between NADH and NADP is coupled to respiration and ATP hydrolysis and functions as a proton pump across the membrane. The polypeptide is NAD(P) transhydrogenase subunit alpha part 2 (pntAB) (Rickettsia prowazekii (strain Madrid E)).